The following is a 290-amino-acid chain: Isopentenyl-diphosphate Delta-isomerase II (290 aa).

The 153-residue stretch at 108-260 (MLHRAFTVFL…GLKLSPWFRL (153 aa)) folds into the Nudix hydrolase domain. Active-site residues include Cys-145 and Glu-207.

Belongs to the IPP isomerase type 1 family.

It carries out the reaction isopentenyl diphosphate = dimethylallyl diphosphate. The protein operates within isoprenoid biosynthesis; dimethylallyl diphosphate biosynthesis; dimethylallyl diphosphate from isopentenyl diphosphate: step 1/1. Its pathway is porphyrin-containing compound metabolism; chlorophyll biosynthesis. Its function is as follows. Catalyzes the 1,3-allylic rearrangement of the homoallylic substrate isopentenyl (IPP) to its highly electrophilic allylic isomer, dimethylallyl diphosphate (DMAPP). The sequence is that of Isopentenyl-diphosphate Delta-isomerase II (IPI2) from Clarkia xantiana (Gunsight clarkia).